The following is a 123-amino-acid chain: Small ribosomal subunit protein uS13c (123 aa).

The tract at residues 90-123 (GKRHRNNLPVRGQRTRTNARSRRGSKKTVTGKKK) is disordered. The span at 102–123 (QRTRTNARSRRGSKKTVTGKKK) shows a compositional bias: basic residues.

This sequence belongs to the universal ribosomal protein uS13 family. In terms of assembly, part of the 30S ribosomal subunit.

It localises to the plastid. The protein localises to the chloroplast. Its function is as follows. Located at the top of the head of the 30S subunit, it contacts several helices of the 16S rRNA. The protein is Small ribosomal subunit protein uS13c of Trieres chinensis (Marine centric diatom).